A 141-amino-acid polypeptide reads, in one-letter code: Hemoglobin subunit alpha (141 aa).

Positions 1 to 141 (VLSPADKTNV…VSTVLTSKYR (141 aa)) constitute a Globin domain. Ser3 bears the Phosphoserine mark. Lys7 carries the post-translational modification N6-succinyllysine. Residue Thr8 is modified to Phosphothreonine. Residue Lys11 is modified to N6-succinyllysine. Lys16 bears the N6-acetyllysine; alternate mark. Lys16 bears the N6-succinyllysine; alternate mark. Tyr24 is subject to Phosphotyrosine. Position 35 is a phosphoserine (Ser35). An N6-succinyllysine modification is found at Lys40. Ser49 bears the Phosphoserine mark. Residue His58 participates in O2 binding. Heme b is bound at residue His87. Residue Ser102 is modified to Phosphoserine. Residue Thr108 is modified to Phosphothreonine. Residues Ser124 and Ser131 each carry the phosphoserine modification. Residues Thr134 and Thr137 each carry the phosphothreonine modification. Ser138 carries the phosphoserine modification.

This sequence belongs to the globin family. In terms of assembly, heterotetramer of two alpha chains and two beta chains. Red blood cells.

Involved in oxygen transport from the lung to the various peripheral tissues. Functionally, hemopressin acts as an antagonist peptide of the cannabinoid receptor CNR1. Hemopressin-binding efficiently blocks cannabinoid receptor CNR1 and subsequent signaling. This Urocitellus parryii (Arctic ground squirrel) protein is Hemoglobin subunit alpha (HBA).